Here is a 366-residue protein sequence, read N- to C-terminus: Class I histocompatibility antigen, Gogo-C*0202 alpha chain (366 aa).

An N-terminal signal peptide occupies residues 1–24 (MRVMAPRTLILLLSGALALTETWA). The tract at residues 25-114 (GSHSMRYFYT…LRGYYNQSED (90 aa)) is alpha-1. At 25–308 (GSHSMRYFYT…EPSSQPTIPI (284 aa)) the chain is on the extracellular side. N-linked (GlcNAc...) asparagine glycosylation is present at Asn110. The tract at residues 115-206 (GSHTLQSMYG…ENGKETLQRA (92 aa)) is alpha-2. 2 cysteine pairs are disulfide-bonded: Cys125-Cys188 and Cys227-Cys283. The tract at residues 207–298 (EPPKTHVTHH…GLPEPLTLRW (92 aa)) is alpha-3. Residues 209–297 (PKTHVTHHPL…EGLPEPLTLR (89 aa)) enclose the Ig-like C1-type domain. The connecting peptide stretch occupies residues 299–308 (EPSSQPTIPI). A helical membrane pass occupies residues 309–332 (VGIVVGLAVLVVLAVLGAVVTAMM). Topologically, residues 333 to 366 (CRRKSSGGKGGSCSQAACSNSAQGSDESLITCKA) are cytoplasmic.

Belongs to the MHC class I family. Heterodimer of an alpha chain and a beta chain (beta-2-microglobulin).

It is found in the membrane. Its function is as follows. Involved in the presentation of foreign antigens to the immune system. This chain is Class I histocompatibility antigen, Gogo-C*0202 alpha chain, found in Gorilla gorilla gorilla (Western lowland gorilla).